A 563-amino-acid chain; its full sequence is Pyruvate decarboxylase (563 aa).

Residues Asp-28 and His-115 each contribute to the pyruvate site. Thiamine diphosphate contacts are provided by residues Thr-390 and 413–415 (GSI). Asp-444 is a binding site for Mg(2+). Residues 445–446 (GS) and 471–476 (NDGYTI) each bind thiamine diphosphate. The Mg(2+) site is built by Asn-471 and Gly-473. Glu-477 lines the pyruvate pocket.

This sequence belongs to the TPP enzyme family. Homotetramer. The cofactor is Mg(2+). It depends on thiamine diphosphate as a cofactor.

It catalyses the reaction a 2-oxocarboxylate + H(+) = an aldehyde + CO2. It carries out the reaction pyruvate + H(+) = acetaldehyde + CO2. The chain is Pyruvate decarboxylase (PDC1) from Kluyveromyces lactis (strain ATCC 8585 / CBS 2359 / DSM 70799 / NBRC 1267 / NRRL Y-1140 / WM37) (Yeast).